Reading from the N-terminus, the 34-residue chain is Jingzhaotoxin F7-10.36 (34 aa).

3 disulfide bridges follow: C2-C17, C9-C22, and C16-C29.

This sequence belongs to the neurotoxin 10 (Hwtx-1) family. 50 (Jztz-F7) subfamily. Expressed by the venom gland.

The protein localises to the secreted. Probable ion channel inhibitor. The polypeptide is Jingzhaotoxin F7-10.36 (Chilobrachys guangxiensis (Chinese earth tiger tarantula)).